The primary structure comprises 330 residues: Glycerol-3-phosphate dehydrogenase [NAD(P)+] (330 aa).

Trp-11, Arg-33, and Lys-105 together coordinate NADPH. Positions 105, 133, and 135 each coordinate sn-glycerol 3-phosphate. Position 137 (Ala-137) interacts with NADPH. Lys-188, Asp-241, Ser-251, Arg-252, and Asn-253 together coordinate sn-glycerol 3-phosphate. Lys-188 (proton acceptor) is an active-site residue. An NADPH-binding site is contributed by Arg-252. Residues Val-276 and Glu-278 each contribute to the NADPH site.

It belongs to the NAD-dependent glycerol-3-phosphate dehydrogenase family.

The protein resides in the cytoplasm. The enzyme catalyses sn-glycerol 3-phosphate + NAD(+) = dihydroxyacetone phosphate + NADH + H(+). The catalysed reaction is sn-glycerol 3-phosphate + NADP(+) = dihydroxyacetone phosphate + NADPH + H(+). It functions in the pathway membrane lipid metabolism; glycerophospholipid metabolism. In terms of biological role, catalyzes the reduction of the glycolytic intermediate dihydroxyacetone phosphate (DHAP) to sn-glycerol 3-phosphate (G3P), the key precursor for phospholipid synthesis. This Acidovorax ebreus (strain TPSY) (Diaphorobacter sp. (strain TPSY)) protein is Glycerol-3-phosphate dehydrogenase [NAD(P)+].